The chain runs to 413 residues: MQSVRQTVLFESEEAWRAGAEQNATAITVHARGGEVVQTRRTWAAAGGPRVRVTWSGGRTVSEVSPQLAAGLSVYVEGGAHVSRDFVQARGQAVFHSAQLELDAVRAWWPRELAVQPEALRWAECAYDIELGRQVRVDEYCALRAGETVALTAAAGGTDEAKVETGVFYPEISDGADVSLSGFRCTWLRDGSGRTDTCQKTLLMYKPAHVHMPEPAVGIELVQPVTLHPVIEVDLSSVSASGPACAHHVFLQLPAQLFVDKFQQPPELLFGEDDLELPEYKVEAWGSEVIYALEPGRVNRVQLHSRYARPGPGRRYEVVPLRPYVFEACDTGSADIAENPFYSKGMGFEAYFTADTVFKHRNSTRLNIPVPRGNSNDFPSIQYVTVLSILFSVLYISYCLFRRPVAASARASG.

Topologically, residues 1–378 (MQSVRQTVLF…PVPRGNSNDF (378 aa)) are lumenal. Asn-362 carries an N-linked (GlcNAc...) asparagine glycan. Residues 379–401 (PSIQYVTVLSILFSVLYISYCLF) traverse the membrane as a helical segment. Residues 402–413 (RRPVAASARASG) are Cytoplasmic-facing.

Belongs to the PIGX family.

It localises to the endoplasmic reticulum membrane. Its pathway is glycolipid biosynthesis; glycosylphosphatidylinositol-anchor biosynthesis. Its function is as follows. Required for proper folding and/or the stability of a subset of proteins in the endoplasmic reticulum. Component of glycosylphosphatidylinositol-mannosyltransferase 1 which transfers the first of the 4 mannoses in the GPI-anchor precursors during GPI-anchor biosynthesis. Probably acts by stabilizing the mannosyltransferase GPI14. This is Protein PBN1 (PBN1) from Eremothecium gossypii (strain ATCC 10895 / CBS 109.51 / FGSC 9923 / NRRL Y-1056) (Yeast).